The following is a 130-amino-acid chain: Small ribosomal subunit protein uS9 (130 aa).

It belongs to the universal ribosomal protein uS9 family.

The polypeptide is Small ribosomal subunit protein uS9 (Xanthomonas campestris pv. campestris (strain 8004)).